A 227-amino-acid polypeptide reads, in one-letter code: PKHD-type hydroxylase CC_0027 (227 aa).

The 101-residue stretch at 78–178 (TILSPMFNRY…RTASFFWIQS (101 aa)) folds into the Fe2OG dioxygenase domain. Histidine 96, aspartate 98, and histidine 159 together coordinate Fe cation. 2-oxoglutarate is bound at residue arginine 169.

Fe(2+) is required as a cofactor. It depends on L-ascorbate as a cofactor.

This Caulobacter vibrioides (strain ATCC 19089 / CIP 103742 / CB 15) (Caulobacter crescentus) protein is PKHD-type hydroxylase CC_0027.